Here is a 523-residue protein sequence, read N- to C-terminus: MGLLHSLHAPAAALLWSCLLGLAAAQEAILHASTNGVSSLSKDYCMYYNNNWTRLPSSLENATSLSLMNLTGTALCHLSDIPPDGIRNKAVVVHWGPCHFLEKARIAQEGGAAALLIANNSVLIPSSRNKSTFQNVTVLIAVITQKDFKDMKETLGDDITVKMYSPSWPNFDYTLVVIFVIAVFTVALGGYWSGLIELENMKSVEDAEDRETRKKKDDYLTFSPLTVVVFVVICCIMIVLLYFFYRWLVYVMIAIFCIASSMSLYNCLSALIHRMPCGQCTILCCGKNIKVSLIFLSGLCISVAVVWAVFRNEDRWAWILQDILGIAFCLNLIKTMKLPNFMSCVILLGLLLIYDVFFVFITPFITKNGESIMVELAAGPFENAEKLPVVIRVPKLMGYSVMSVCSVPVSVLGFGDIIVPGLLIAYCRRFDVQTGSSIYYISSTIAYAVGMIITFVVLMVMKTGQPALLYLVPCTLITVSVVAWSRKEMKKFWKGSSYQVMDHLDYSTNEENPVTTDEQIVQQ.

The first 25 residues, 1-25 (MGLLHSLHAPAAALLWSCLLGLAAA), serve as a signal peptide directing secretion. Residues 26–175 (QEAILHASTN…PSWPNFDYTL (150 aa)) are Lumenal-facing. N-linked (GlcNAc...) asparagine glycosylation is found at Asn51, Asn61, Asn69, Asn119, Asn129, and Asn135. The PA domain occupies 70–155 (LTGTALCHLS…KDFKDMKETL (86 aa)). The chain crosses the membrane as a helical span at residues 176-196 (VVIFVIAVFTVALGGYWSGLI). Over 197–224 (ELENMKSVEDAEDRETRKKKDDYLTFSP) the chain is Cytoplasmic. Residues 225-245 (LTVVVFVVICCIMIVLLYFFY) traverse the membrane as a helical segment. Residues 246 to 247 (RW) lie on the Lumenal side of the membrane. The chain crosses the membrane as a helical span at residues 248–268 (LVYVMIAIFCIASSMSLYNCL). Over 269–288 (SALIHRMPCGQCTILCCGKN) the chain is Cytoplasmic. A helical membrane pass occupies residues 289–309 (IKVSLIFLSGLCISVAVVWAV). The Lumenal segment spans residues 310-315 (FRNEDR). A helical membrane pass occupies residues 316–336 (WAWILQDILGIAFCLNLIKTM). Topologically, residues 337-344 (KLPNFMSC) are cytoplasmic. Residues 345–365 (VILLGLLLIYDVFFVFITPFI) traverse the membrane as a helical segment. Residue Asp355 is part of the active site. At 366-403 (TKNGESIMVELAAGPFENAEKLPVVIRVPKLMGYSVMS) the chain is on the lumenal side. The chain crosses the membrane as a helical span at residues 404–424 (VCSVPVSVLGFGDIIVPGLLI). Asp416 is an active-site residue. Topologically, residues 425–440 (AYCRRFDVQTGSSIYY) are cytoplasmic. Residues 441–461 (ISSTIAYAVGMIITFVVLMVM) traverse the membrane as a helical segment. The Lumenal segment spans residues 462–463 (KT). The chain crosses the membrane as a helical span at residues 464–484 (GQPALLYLVPCTLITVSVVAW). Residues 466–468 (PAL) carry the PAL motif. At 485–523 (SRKEMKKFWKGSSYQVMDHLDYSTNEENPVTTDEQIVQQ) the chain is on the cytoplasmic side. Residues 498-501 (YQVM) carry the YXXo lysosomal targeting motif motif.

It belongs to the peptidase A22B family. As to quaternary structure, interacts with ITM2B. Glycosylated.

It is found in the late endosome membrane. The protein resides in the lysosome membrane. Its subcellular location is the membrane. In terms of biological role, intramembrane-cleaving aspartic protease (I-CLiP) that cleaves type II membrane signal peptides in the hydrophobic plane of the membrane. Functions in FASLG, ITM2B and TNF processing. Catalyzes the intramembrane cleavage of the anchored fragment of shed TNF-alpha (TNF), which promotes the release of the intracellular domain (ICD) for signaling to the nucleus. Also responsible for the intramembrane cleavage of Fas antigen ligand FASLG, which promotes the release of the intracellular FasL domain (FasL ICD). Essential for degradation of the invariant chain CD74 that plays a central role in the function of antigen-presenting cells in the immune system. Plays a role in the regulation of innate and adaptive immunity. In Mus musculus (Mouse), this protein is Signal peptide peptidase-like 2A.